The following is a 48-amino-acid chain: MKKSLWLWGFTDSAETWNGRFAMIGFISVIFIEVVTGQGLLYLIGMMS.

This sequence belongs to the ELIP/psbS family.

The protein localises to the plastid. It is found in the chloroplast. In terms of biological role, possible role in chlorophyll and/or carotenoid binding. This is an uncharacterized protein from Pyropia yezoensis (Susabi-nori).